The chain runs to 353 residues: Holliday junction branch migration complex subunit RuvB (353 aa).

Residues 4 to 185 (ADRLITATGG…FGIVQRLEFY (182 aa)) are large ATPase domain (RuvB-L). ATP contacts are provided by residues isoleucine 24, arginine 25, glycine 66, lysine 69, threonine 70, threonine 71, 132-134 (EDF), arginine 175, tyrosine 185, and arginine 222. Position 70 (threonine 70) interacts with Mg(2+). The interval 186 to 256 (NIADLSTIVS…TADKALNLLD (71 aa)) is small ATPAse domain (RuvB-S). The segment at 259–353 (EHGFDHQDRR…DDFGDEPVDL (95 aa)) is head domain (RuvB-H). The DNA site is built by arginine 295, arginine 314, and arginine 319.

This sequence belongs to the RuvB family. In terms of assembly, homohexamer. Forms an RuvA(8)-RuvB(12)-Holliday junction (HJ) complex. HJ DNA is sandwiched between 2 RuvA tetramers; dsDNA enters through RuvA and exits via RuvB. An RuvB hexamer assembles on each DNA strand where it exits the tetramer. Each RuvB hexamer is contacted by two RuvA subunits (via domain III) on 2 adjacent RuvB subunits; this complex drives branch migration. In the full resolvosome a probable DNA-RuvA(4)-RuvB(12)-RuvC(2) complex forms which resolves the HJ.

It localises to the cytoplasm. The catalysed reaction is ATP + H2O = ADP + phosphate + H(+). In terms of biological role, the RuvA-RuvB-RuvC complex processes Holliday junction (HJ) DNA during genetic recombination and DNA repair, while the RuvA-RuvB complex plays an important role in the rescue of blocked DNA replication forks via replication fork reversal (RFR). RuvA specifically binds to HJ cruciform DNA, conferring on it an open structure. The RuvB hexamer acts as an ATP-dependent pump, pulling dsDNA into and through the RuvAB complex. RuvB forms 2 homohexamers on either side of HJ DNA bound by 1 or 2 RuvA tetramers; 4 subunits per hexamer contact DNA at a time. Coordinated motions by a converter formed by DNA-disengaged RuvB subunits stimulates ATP hydrolysis and nucleotide exchange. Immobilization of the converter enables RuvB to convert the ATP-contained energy into a lever motion, pulling 2 nucleotides of DNA out of the RuvA tetramer per ATP hydrolyzed, thus driving DNA branch migration. The RuvB motors rotate together with the DNA substrate, which together with the progressing nucleotide cycle form the mechanistic basis for DNA recombination by continuous HJ branch migration. Branch migration allows RuvC to scan DNA until it finds its consensus sequence, where it cleaves and resolves cruciform DNA. This chain is Holliday junction branch migration complex subunit RuvB, found in Pseudomonas syringae pv. syringae (strain B728a).